We begin with the raw amino-acid sequence, 389 residues long: Flagellar P-ring protein (389 aa).

An N-terminal signal peptide occupies residues 1–33; the sequence is MRPLVAARRRAAACCALAACMLALAFAPAAARA.

It belongs to the FlgI family. In terms of assembly, the basal body constitutes a major portion of the flagellar organelle and consists of four rings (L,P,S, and M) mounted on a central rod.

It is found in the periplasm. The protein resides in the bacterial flagellum basal body. Its function is as follows. Assembles around the rod to form the L-ring and probably protects the motor/basal body from shearing forces during rotation. This chain is Flagellar P-ring protein, found in Burkholderia pseudomallei (strain K96243).